Reading from the N-terminus, the 473-residue chain is Asparagine--tRNA ligase (473 aa).

The protein belongs to the class-II aminoacyl-tRNA synthetase family. As to quaternary structure, homodimer.

The protein resides in the cytoplasm. The catalysed reaction is tRNA(Asn) + L-asparagine + ATP = L-asparaginyl-tRNA(Asn) + AMP + diphosphate + H(+). The polypeptide is Asparagine--tRNA ligase (Treponema denticola (strain ATCC 35405 / DSM 14222 / CIP 103919 / JCM 8153 / KCTC 15104)).